The sequence spans 420 residues: Histidine--tRNA ligase (420 aa).

Belongs to the class-II aminoacyl-tRNA synthetase family. In terms of assembly, homodimer.

The protein resides in the cytoplasm. The catalysed reaction is tRNA(His) + L-histidine + ATP = L-histidyl-tRNA(His) + AMP + diphosphate + H(+). This is Histidine--tRNA ligase (hisS) from Thermotoga maritima (strain ATCC 43589 / DSM 3109 / JCM 10099 / NBRC 100826 / MSB8).